Here is a 243-residue protein sequence, read N- to C-terminus: Ribosomal RNA small subunit methyltransferase G (243 aa).

Residues glycine 97, leucine 102, 148 to 149, and arginine 161 each bind S-adenosyl-L-methionine; that span reads VE.

Belongs to the methyltransferase superfamily. RNA methyltransferase RsmG family.

Its subcellular location is the cytoplasm. It carries out the reaction guanosine(527) in 16S rRNA + S-adenosyl-L-methionine = N(7)-methylguanosine(527) in 16S rRNA + S-adenosyl-L-homocysteine. Specifically methylates the N7 position of guanine in position 527 of 16S rRNA. The sequence is that of Ribosomal RNA small subunit methyltransferase G from Paracidovorax citrulli (strain AAC00-1) (Acidovorax citrulli).